Here is a 145-residue protein sequence, read N- to C-terminus: Aegerolysin Aa-Pri1 (145 aa).

A propeptide spanning residues 1–8 (MDSNKDER) is cleaved from the precursor.

It belongs to the aegerolysin family.

The protein is Aegerolysin Aa-Pri1 (AA-PRI1) of Cyclocybe aegerita (Black poplar mushroom).